A 765-amino-acid polypeptide reads, in one-letter code: Ubiquitin-like modifier-activating enzyme atg7 (765 aa).

The short motif at 436–441 is the GXGXXG motif element; that stretch reads GAGTLG. Cysteine 616 (glycyl thioester intermediate) is an active-site residue. 2 disordered regions span residues 646 to 670 and 744 to 765; these read AAPA…PPNH and AAND…PELL. The homodimerization stretch occupies residues 721–760; it reads ALTEKDYITELSGLAEVQRKAEAAANDVEWDSDEEGMEDE. Over residues 748 to 765 the composition is skewed to acidic residues; that stretch reads VEWDSDEEGMEDEEPELL.

It belongs to the ATG7 family. In terms of assembly, homodimer. Interacts with ATG8 through a thioester bond between Cys-616 and the C-terminal Gly of ATG8 and with ATG12 through a thioester bond between Cys-616 and the C-terminal Gly of ATG12. Also interacts with ATG3.

It localises to the cytoplasm. It is found in the preautophagosomal structure. Its function is as follows. E1-like activating enzyme involved in the 2 ubiquitin-like systems required for cytoplasm to vacuole transport (Cvt) and autophagy. Activates ATG12 for its conjugation with ATG5 and ATG8 for its conjugation with phosphatidylethanolamine. Both systems are needed for the ATG8 association to Cvt vesicles and autophagosomes membranes. Autophagy is essential for maintenance of amino acid levels and protein synthesis under nitrogen starvation. Required for selective autophagic degradation of the nucleus (nucleophagy) as well as for mitophagy which contributes to regulate mitochondrial quantity and quality by eliminating the mitochondria to a basal level to fulfill cellular energy requirements and preventing excess ROS production. Required for normal mycelial growth and conidiogenesis, and regulates sclerotial formation. Plays an essential role in pathogenesis. This chain is Ubiquitin-like modifier-activating enzyme atg7, found in Botryotinia fuckeliana (strain BcDW1) (Noble rot fungus).